The following is a 100-amino-acid chain: Urease subunit gamma (100 aa).

The protein belongs to the urease gamma subunit family. In terms of assembly, heterotrimer of UreA (gamma), UreB (beta) and UreC (alpha) subunits. Three heterotrimers associate to form the active enzyme.

It localises to the cytoplasm. It carries out the reaction urea + 2 H2O + H(+) = hydrogencarbonate + 2 NH4(+). It functions in the pathway nitrogen metabolism; urea degradation; CO(2) and NH(3) from urea (urease route): step 1/1. This is Urease subunit gamma from Nitrosococcus oceani (strain ATCC 19707 / BCRC 17464 / JCM 30415 / NCIMB 11848 / C-107).